A 1323-amino-acid polypeptide reads, in one-letter code: MRGAGGPRGPRGPAKMLLLLALACASPFPEEVPGPGAVGGGTGGARPLNVALVFSGPAYAAEAARLGPAVAAAVRSPGLDVRPVALVLNGSDPRSLVLQLCDLLSGLRVHGVVFEDDSRAPAVAPILDFLSAQTSLPIVAVHGGAALVLTPKEKGSTFLQLGSSTEQQLQVIFEVLEEYDWTSFVAVTTRAPGHRAFLSYIEVLTDGSLVGWEHRGALTLDPGAGEAVLGAQLRSVSAQIRLLFCAREEAEPVFRAAEEAGLTGPGYVWFMVGPQLAGGGGSGVPGEPLLLPGGSPLPAGLFAVRSAGWRDDLARRVAAGVAVVARGAQALLRDYGFLPELGHDCRTQNRTHRGESLHRYFMNITWDNRDYSFNEDGFLVNPSLVVISLTRDRTWEVVGSWEQQTLRLKYPLWSRYGRFLQPVDDTQHLTVATLEERPFVIVEPADPISGTCIRDSVPCRSQLNRTHSPPPDAPRPEKRCCKGFCIDILKRLAHTIGFSYDLYLVTNGKHGKKIDGVWNGMIGEVFYQRADMAIGSLTINEERSEIVDFSVPFVETGISVMVARSNGTVSPSAFLEPYSPAVWVMMFVMCLTVVAVTVFIFEYLSPVGYNRSLATGKRPGGSTFTIGKSIWLLWALVFNNSVPVENPRGTTSKIMVLVWAFFAVIFLASYTANLAAFMIQEEYVDTVSGLSDRKFQRPQEQYPPLKFGTVPNGSTEKNIRSNYPDMHSYMVRYNQPRVEEALTQLKAGKLDAFIYDAAVLNYMARKDEGCKLVTIGSGKVFATTGYGIALHKGSRWKRPIDLALLQFLGDDEIEMLERLWLSGICHNDKIEVMSSKLDIDNMAGVFYMLLVAMGLSLLVFAWEHLVYWRLRHCLGPTHRMDFLLAFSRGMYSCCSAEAAPPPAKPPPPPQPLPSPAYPAARPPPGPAPFVPRERAAADRWRRAKGTGPPGGAAIADGFHRYYGPIEPQGLGLGEARAAPRGAAGRPLSPPTTQPPQKPPPSYFAIVREQEPTEPPAGAFPGFPSPPAPPAAAAAAVGPPLCRLAFEDESPPAPSRWPRSDPESQPLLGGGAGGPSAGAPTAPPPRRAAPPPCAYLDLEPSPSDSEDSESLGGASLGGLEPWWFADFPYPYAERLGPPPGRYWSVDKLGGWRAGSWDYLPPRGGPAWHCRHCASLELLPPPRHLSCSHDGLDGGWWAPPPPPWAAGPPPRRRARCGCPRPHPHRPRASHRAPAAAPHHHRHRRAAGGWDFPPPAPTSRSLEDLSSCPRAAPTRRLTGPSRHARRCPHAAHWGPPLPTASHRRHRGGDLGTRRGSAHFSSLESEV.

An N-terminal signal peptide occupies residues 1–27; sequence MRGAGGPRGPRGPAKMLLLLALACASP. The Extracellular portion of the chain corresponds to 28 to 579; that stretch reads FPEEVPGPGA…SPSAFLEPYS (552 aa). N-linked (GlcNAc...) asparagine glycosylation is present at Asn-89. An intrachain disulfide couples Cys-101 to Cys-345. 4 N-linked (GlcNAc...) asparagine glycosylation sites follow: Asn-349, Asn-363, Asn-381, and Asn-464. 2 disulfide bridges follow: Cys-452–Cys-480 and Cys-459–Cys-481. L-glutamate-binding residues include Ser-536, Thr-538, and Arg-543. The N-linked (GlcNAc...) asparagine glycan is linked to Asn-566. A helical transmembrane segment spans residues 580-601; it reads PAVWVMMFVMCLTVVAVTVFIF. The Cytoplasmic segment spans residues 602–626; sequence EYLSPVGYNRSLATGKRPGGSTFTI. An intramembrane region (discontinuously helical) is located at residues 627–638; it reads GKSIWLLWALVF. Residues 628–647 are pore-forming; that stretch reads KSIWLLWALVFNNSVPVENP. Residues 639 to 650 lie on the Cytoplasmic side of the membrane; that stretch reads NNSVPVENPRGT. A helical membrane pass occupies residues 651–671; that stretch reads TSKIMVLVWAFFAVIFLASYT. At 672–840 the chain is on the extracellular side; sequence ANLAAFMIQE…EVMSSKLDID (169 aa). An N-linked (GlcNAc...) asparagine glycan is attached at Asn-712. L-glutamate-binding residues include Ser-714, Thr-715, and Asp-756. Cysteines 770 and 825 form a disulfide. A helical transmembrane segment spans residues 841-864; that stretch reads NMAGVFYMLLVAMGLSLLVFAWEH. Residues 865–1323 are Cytoplasmic-facing; the sequence is LVYWRLRHCL…AHFSSLESEV (459 aa). 3 disordered regions span residues 897–952, 977–1112, and 1201–1323; these read EAAP…PGGA, AAPR…SLGG, and PWAA…ESEV. Pro residues predominate over residues 899–929; sequence APPPAKPPPPPQPLPSPAYPAARPPPGPAPF. The segment covering 931–940 has biased composition (basic and acidic residues); the sequence is PRERAAADRW. Residues 977–986 are compositionally biased toward low complexity; that stretch reads AAPRGAAGRP. The segment covering 987-1001 has biased composition (pro residues); the sequence is LSPPTTQPPQKPPPS. The segment covering 1030-1039 has biased composition (low complexity); it reads AAAAAAVGPP. Pro residues predominate over residues 1080–1092; it reads TAPPPRRAAPPPC. The span at 1208 to 1228 shows a compositional bias: basic residues; it reads PRRRARCGCPRPHPHRPRASH. An Omega-N-methylarginine modification is found at Arg-1303. A Phosphoserine modification is found at Ser-1313. The short motif at 1321-1323 is the PDZ-binding element; that stretch reads SEV.

Belongs to the glutamate-gated ion channel (TC 1.A.10.1) family. NR2D/GRIN2D subfamily. In terms of assembly, heterotetramer. Forms heterotetrameric channels composed of two GluN1/zeta subunits (GRIN1), and two identical GluN2/epsilon subunits (GRIN2A, GRIN2B, GRIN2C or GRIN2D) or GluN3 subunits (GRIN3A or GRIN3B) (in vitro). In vivo, the subunit composition may depend on the expression levels of the different subunits. Interacts with PDZ domains of PATJ and DLG4. As to expression, expressed in brain, mainly in the subcortical region.

It is found in the cell membrane. It localises to the postsynaptic cell membrane. The enzyme catalyses Ca(2+)(in) = Ca(2+)(out). The catalysed reaction is Na(+)(in) = Na(+)(out). It carries out the reaction K(+)(in) = K(+)(out). Its function is as follows. Component of N-methyl-D-aspartate (NMDA) receptors (NMDARs) that function as heterotetrameric, ligand-gated cation channels with high calcium permeability and voltage-dependent block by Mg(2+). Participates in synaptic plasticity for learning and memory formation. Channel activation requires binding of the neurotransmitter L-glutamate to the GluN2 subunit, glycine or D-serine binding to the GluN1 subunit, plus membrane depolarization to eliminate channel inhibition by Mg(2+). NMDARs mediate simultaneously the potasium efflux and the influx of calcium and sodium. Each GluN2 subunit confers differential attributes to channel properties, including activation, deactivation and desensitization kinetics, pH sensitivity, Ca2(+) permeability, and binding to allosteric modulators. This chain is Glutamate receptor ionotropic, NMDA 2D, found in Rattus norvegicus (Rat).